A 420-amino-acid chain; its full sequence is Gamma-glutamyl phosphate reductase (420 aa).

Belongs to the gamma-glutamyl phosphate reductase family.

The protein resides in the cytoplasm. It carries out the reaction L-glutamate 5-semialdehyde + phosphate + NADP(+) = L-glutamyl 5-phosphate + NADPH + H(+). It participates in amino-acid biosynthesis; L-proline biosynthesis; L-glutamate 5-semialdehyde from L-glutamate: step 2/2. Functionally, catalyzes the NADPH-dependent reduction of L-glutamate 5-phosphate into L-glutamate 5-semialdehyde and phosphate. The product spontaneously undergoes cyclization to form 1-pyrroline-5-carboxylate. The polypeptide is Gamma-glutamyl phosphate reductase (Pasteurella multocida (strain Pm70)).